Here is a 491-residue protein sequence, read N- to C-terminus: MANYFNTLNLRQQLAQLGKCRFMGRDEFADGASYLQGKKVVIVGCGAQGLNQGLNMRDSGLDISYALRKEAIAEKRASWRKATENGFKVGTYEELIPQADLVVNLTPDKQHSDVVRTVQPLMKDGAALGYSHGFNIVEVGEQIRKDITVVMVAPKCPGTEVREEYKRGFGVPTLIAVHPENDPKGEGMAIAKAWAAATGGHRAGVLESSFVAEVKSDLMGEQTILCGMLQAGSLLCFDKLVEEGTDPAYAEKLIQFGWETITEALKQGGITLMMDRLSNPAKLRAYALSEQLKEIMAPLFQKHMDDIISGEFSSGMMADWANDDKKLLTWREETGKTAFETAPQYEGKIGEQEYFDKGVLMIAMVKAGVELAFETMVDSGIIEESAYYESLHELPLIANTIARKRLYEMNVVISDTAEYGNYLFSYACVPLLKPFMAELQPGDLGKAIPEGAVDNAQLHDVNEAIRSHAIEQVGKKLRGYMTDMKRIAVAG.

Residues 15-208 (AQLGKCRFMG…GGHRAGVLES (194 aa)) enclose the KARI N-terminal Rossmann domain. NADP(+)-binding positions include 45–48 (CGAQ), R68, R76, S78, and 108–110 (DKQ). H132 is an active-site residue. NADP(+) is bound at residue G158. KARI C-terminal knotted domains lie at 209-344 (SFVA…TAPQ) and 345-484 (YEGK…MTDM). Mg(2+) is bound by residues D217, E221, E389, and E393. S414 lines the substrate pocket.

The protein belongs to the ketol-acid reductoisomerase family. The cofactor is Mg(2+).

The enzyme catalyses (2R)-2,3-dihydroxy-3-methylbutanoate + NADP(+) = (2S)-2-acetolactate + NADPH + H(+). It catalyses the reaction (2R,3R)-2,3-dihydroxy-3-methylpentanoate + NADP(+) = (S)-2-ethyl-2-hydroxy-3-oxobutanoate + NADPH + H(+). It participates in amino-acid biosynthesis; L-isoleucine biosynthesis; L-isoleucine from 2-oxobutanoate: step 2/4. Its pathway is amino-acid biosynthesis; L-valine biosynthesis; L-valine from pyruvate: step 2/4. Involved in the biosynthesis of branched-chain amino acids (BCAA). Catalyzes an alkyl-migration followed by a ketol-acid reduction of (S)-2-acetolactate (S2AL) to yield (R)-2,3-dihydroxy-isovalerate. In the isomerase reaction, S2AL is rearranged via a Mg-dependent methyl migration to produce 3-hydroxy-3-methyl-2-ketobutyrate (HMKB). In the reductase reaction, this 2-ketoacid undergoes a metal-dependent reduction by NADPH to yield (R)-2,3-dihydroxy-isovalerate. The chain is Ketol-acid reductoisomerase (NADP(+)) from Shigella dysenteriae serotype 1 (strain Sd197).